The primary structure comprises 208 residues: Protein-L-isoaspartate O-methyltransferase (208 aa).

Serine 59 is a catalytic residue.

It belongs to the methyltransferase superfamily. L-isoaspartyl/D-aspartyl protein methyltransferase family. Monomer.

It is found in the cytoplasm. The catalysed reaction is [protein]-L-isoaspartate + S-adenosyl-L-methionine = [protein]-L-isoaspartate alpha-methyl ester + S-adenosyl-L-homocysteine. Functionally, catalyzes the methyl esterification of L-isoaspartyl residues in peptides and proteins that result from spontaneous decomposition of normal L-aspartyl and L-asparaginyl residues. It plays a role in the repair and/or degradation of damaged proteins. This is Protein-L-isoaspartate O-methyltransferase (pcm) from Shigella flexneri.